Consider the following 620-residue polypeptide: Nuclear cap-binding protein subunit 3 (620 aa).

Lys-12 participates in a covalent cross-link: Glycyl lysine isopeptide (Lys-Gly) (interchain with G-Cter in SUMO2). The segment covering 15–28 (APAGPALGLPSPEA) has biased composition (low complexity). The interval 15 to 42 (APAGPALGLPSPEAESGVDRGEPEPMEV) is disordered. The residue at position 25 (Ser-25) is a Phosphoserine. Lys-70 is covalently cross-linked (Glycyl lysine isopeptide (Lys-Gly) (interchain with G-Cter in SUMO2)). At Ser-73 the chain carries Phosphoserine. Positions 126 to 187 (ETIYICGVDE…MSSLPAQDKI (62 aa)) are RNA recognition motif (RRM) domain. The short motif at 155–158 (WLDD) is the WLDD motif; essential for 7-methylguanosine-containing mRNA cap binding element. Basic and acidic residues predominate over residues 185–198 (DKIRSRDASEDKSA). 3 disordered regions span residues 185–233 (DKIR…LDTL), 332–419 (HSGL…PKKS), and 436–620 (IRNS…EAES). A Glycyl lysine isopeptide (Lys-Gly) (interchain with G-Cter in SUMO2) cross-link involves residue Lys-186. A phosphoserine mark is found at Ser-209 and Ser-210. 2 stretches are compositionally biased toward acidic residues: residues 209–230 (SSDD…DVEL) and 341–365 (EPIE…DMDA). A compositionally biased stretch (basic and acidic residues) spans 366 to 388 (DDRVVVEYHEELPALKQPRERSA). Residue Thr-413 is modified to Phosphothreonine. The residue at position 415 (Ser-415) is a Phosphoserine. 2 stretches are compositionally biased toward basic and acidic residues: residues 459 to 474 (PPEK…DEKR) and 511 to 521 (VRREPSSDVHS). Lys-541 is covalently cross-linked (Glycyl lysine isopeptide (Lys-Gly) (interchain with G-Cter in SUMO2)). Composition is skewed to basic and acidic residues over residues 554-569 (KTKE…RAPG) and 585-598 (IKEK…KSRL). Over residues 611-620 (ESSSGSEAES) the composition is skewed to low complexity. Ser-620 is modified (phosphoserine).

Belongs to the NCBP3 family. Component of an alternative cap-binding complex (CBC) composed of NCBP1/CBP80 and NCBP3. Interacts with SRRT, KPNA3, THOC5 and EIF4A3.

It is found in the nucleus. The protein resides in the cytoplasm. Associates with NCBP1/CBP80 to form an alternative cap-binding complex (CBC) which plays a key role in mRNA export. NCBP3 serves as adapter protein linking the capped RNAs (m7GpppG-capped RNA) to NCBP1/CBP80. Unlike the conventional CBC with NCBP2 which binds both small nuclear RNA (snRNA) and messenger (mRNA) and is involved in their export from the nucleus, the alternative CBC with NCBP3 does not bind snRNA and associates only with mRNA thereby playing a role in only mRNA export. The alternative CBC is particularly important in cellular stress situations such as virus infections and the NCBP3 activity is critical to inhibit virus growth. In Homo sapiens (Human), this protein is Nuclear cap-binding protein subunit 3.